The primary structure comprises 284 residues: Bifunctional protein FolD (284 aa).

NADP(+) contacts are provided by residues 165–167 (GRS), serine 190, and valine 231.

Belongs to the tetrahydrofolate dehydrogenase/cyclohydrolase family. As to quaternary structure, homodimer.

It carries out the reaction (6R)-5,10-methylene-5,6,7,8-tetrahydrofolate + NADP(+) = (6R)-5,10-methenyltetrahydrofolate + NADPH. The enzyme catalyses (6R)-5,10-methenyltetrahydrofolate + H2O = (6R)-10-formyltetrahydrofolate + H(+). It participates in one-carbon metabolism; tetrahydrofolate interconversion. In terms of biological role, catalyzes the oxidation of 5,10-methylenetetrahydrofolate to 5,10-methenyltetrahydrofolate and then the hydrolysis of 5,10-methenyltetrahydrofolate to 10-formyltetrahydrofolate. In Natranaerobius thermophilus (strain ATCC BAA-1301 / DSM 18059 / JW/NM-WN-LF), this protein is Bifunctional protein FolD.